The following is a 363-amino-acid chain: NADH-quinone oxidoreductase subunit H (363 aa).

10 consecutive transmembrane segments (helical) span residues 29-49 (VLKI…YVVW), 62-82 (GPMY…KLLF), 96-116 (FIIA…VVPF), 127-147 (VGLL…ILAG), 163-183 (AAQV…VMIA), 202-222 (FFDW…VSGV), 238-257 (EIVA…LFFL), 278-298 (WLSP…DWLW), 299-319 (KGGW…YIWF), and 339-359 (FIPL…YGVI).

This sequence belongs to the complex I subunit 1 family. In terms of assembly, NDH-1 is composed of 14 different subunits. Subunits NuoA, H, J, K, L, M, N constitute the membrane sector of the complex.

It localises to the cell inner membrane. The catalysed reaction is a quinone + NADH + 5 H(+)(in) = a quinol + NAD(+) + 4 H(+)(out). NDH-1 shuttles electrons from NADH, via FMN and iron-sulfur (Fe-S) centers, to quinones in the respiratory chain. The immediate electron acceptor for the enzyme in this species is believed to be ubiquinone. Couples the redox reaction to proton translocation (for every two electrons transferred, four hydrogen ions are translocated across the cytoplasmic membrane), and thus conserves the redox energy in a proton gradient. This subunit may bind ubiquinone. In Xanthomonas oryzae pv. oryzae (strain MAFF 311018), this protein is NADH-quinone oxidoreductase subunit H.